Here is a 1191-residue protein sequence, read N- to C-terminus: DNA-directed RNA polymerase subunit beta (1191 aa).

Over residues 1171–1181 (RVKQEAEEKQA) the composition is skewed to basic and acidic residues. The interval 1171–1191 (RVKQEAEEKQAEQVSEVVQED) is disordered. Residues 1182–1191 (EQVSEVVQED) show a composition bias toward low complexity.

This sequence belongs to the RNA polymerase beta chain family. The RNAP catalytic core consists of 2 alpha, 1 beta, 1 beta' and 1 omega subunit. When a sigma factor is associated with the core the holoenzyme is formed, which can initiate transcription.

The catalysed reaction is RNA(n) + a ribonucleoside 5'-triphosphate = RNA(n+1) + diphosphate. DNA-dependent RNA polymerase catalyzes the transcription of DNA into RNA using the four ribonucleoside triphosphates as substrates. The sequence is that of DNA-directed RNA polymerase subunit beta from Streptococcus agalactiae serotype Ia (strain ATCC 27591 / A909 / CDC SS700).